A 397-amino-acid polypeptide reads, in one-letter code: Phosphoglycerate kinase (397 aa).

Residues 21 to 23 (DMN), R36, 59 to 62 (HLGR), R114, and R147 contribute to the substrate site. ATP-binding positions include K198, E320, and 346 to 349 (GGDT).

This sequence belongs to the phosphoglycerate kinase family. As to quaternary structure, monomer.

The protein localises to the cytoplasm. The catalysed reaction is (2R)-3-phosphoglycerate + ATP = (2R)-3-phospho-glyceroyl phosphate + ADP. The protein operates within carbohydrate degradation; glycolysis; pyruvate from D-glyceraldehyde 3-phosphate: step 2/5. This chain is Phosphoglycerate kinase, found in Neisseria gonorrhoeae (strain NCCP11945).